Consider the following 968-residue polypeptide: MKYLVSVGAGPARRAGGLEDVSWGPRVSRRPQSYRAARHVNESLPRSAFRVPAAHGASVTPSAALGSGLPETQPEAVCRGTEKPRFAEGCKPAASRDKNVLAKALYDNVAESPDELSFRKGDIMTVLERDTQGLDGWWLCSLHGRQGIVPGNRLKILVGMYDKKPAAPGPGPPATPPQPQPSLPQGVHTPVPPASQYSPMLPTAYQPQPDNVYLVPTPSKTQQGLYQAPGPNPQFQSPPAKQTSTFSKQTPHHSFPSPATDLYQVPPGPGSPAQDIYQVPPSAGTGHDIYQVPPSLDTRSWEGTKPPAKVVVPTRVGQGYVYEASQAEQDEYDTPRHLLAPGSQDIYDVPPVRGLLPNQYGQEVYDTPPMAVKGPNGRDPLLDVYDVPPSVEKGLPPSNHHSVYDVPPSVSKDVPDGPLLREETYDVPPAFAKPKPFDPTRHPLILAAPPPDSPPAEDVYDVPPPAPDLYDVPPGLRRPGPGTLYDVPRERVLPPEVADGSVIDDGVYAVPPPAEREAPTDGKRLSASSTGSTRSSQSASSLEVVVPGREPLELEVAVETLARLQQGVSTTVAHLLDLVGSASGPGGWRSTSEPQEPPVQDLKAAVAAVHGAVHELLEFARSAVSSATHTSDRTLHAKLSRQLQKMEDVYQTLVVHGQVLDSGRGGPGFTLDDLDRLVACSRAVPEDAKQLASFLHGNASLLFRRTKAPGPGPEGSSSLHLNPTDKASSIQSRPLPSPPKFTSQDSPDGQYENSEGGWMEDYDYVHLQGKEEFEKTQKELLEKGNIVRQGKGQLELQQLKQFERLEQEVSRPIDHDLANWTPAQPLVPGRTGGLGPSDRQLLLFYLEQCEANLTTLTDAVDAFFTAVATNQPPKIFVAHSKFVILSAHKLVFIGDTLSRQAKAADVRSKVTHYSNLLCDLLRGIVATTKAAALQYPSPSAAQDMVDRVKELGHSTQQFRRVLGQLAAA.

Position 1 is an N-acetylmethionine (methionine 1). The SH3 domain occupies 97–159 (DKNVLAKALY…PGNRLKILVG (63 aa)). A disordered region spans residues 164 to 277 (KPAAPGPGPP…GPGSPAQDIY (114 aa)). Residues 167 to 182 (APGPGPPATPPQPQPS) are compositionally biased toward pro residues. A substrate for kinases region spans residues 213–514 (YLVPTPSKTQ…DGVYAVPPPA (302 aa)). Tyrosine 226 carries the post-translational modification Phosphotyrosine; by SRC. Positions 233–249 (PQFQSPPAKQTSTFSKQ) are enriched in polar residues. The residue at position 237 (serine 237) is a Phosphoserine. Phosphotyrosine is present on tyrosine 332. Tyrosine 347 is subject to Phosphotyrosine; by ABL1. Threonine 367 carries the phosphothreonine modification. Phosphoserine is present on serine 390. The disordered stretch occupies residues 393 to 416 (KGLPPSNHHSVYDVPPSVSKDVPD). Phosphotyrosine occurs at positions 460, 470, and 508. Disordered stretches follow at residues 503-544 (IDDG…SLEV) and 705-756 (RTKA…NSEG). Residues 514-524 (AEREAPTDGKR) are compositionally biased toward basic and acidic residues. Residues 525–542 (LSASSTGSTRSSQSASSL) are compositionally biased toward low complexity. Serine 526, serine 535, and serine 737 each carry phosphoserine. A compositionally biased stretch (polar residues) spans 715-753 (GSSSLHLNPTDKASSIQSRPLPSPPKFTSQDSPDGQYEN). An SH3-binding motif is present at residues 733–741 (RPLPSPPKF). A divergent helix-loop-helix motif region spans residues 844-894 (FYLEQCEANLTTLTDAVDAFFTAVATNQPPKIFVAHSKFVILSAHKLVFIG).

The protein belongs to the CAS family. Forms complexes in vivo with PTK2/FAK1, adapter protein CRKL and LYN kinase. Can heterodimerize with NEDD9. Component of a complex comprised of SH2D3C, BCAR1/CAS, and CRK. Within the complex, interacts with SH2D3C (via C-terminus), and CRK. Part of a complex comprised of PTPRA, BCAR1, BCAR3 (via SH2 domain) and SRC; the formation of the complex is dependent on integrin mediated-tyrosine phosphorylation of PTPRA. Interacts with BCAR3 (via Ras-GEF domain); the interaction regulates adhesion-dependent serine phosphorylation. Interacts with SMAD2 and SMAD3. Interacts with NPHP1. Interacts with PTK2B/PYK2. Interacts (via C-terminus) with SH2D3C/CHAT isoform 2 (via C-terminus). Interacts with activated CSPG4. Interacts with BMX, INPPL1/SHIP2 and PEAK1. Part of a collagen stimulated complex involved in cell migration composed of CDC42, CRK, TNK2 and BCAR1/p130cas. Interacts with TNK2 via SH3 domains. Interacts with PTK2B/PYK2. Interacts (when tyrosine-phosphorylated) with tensin TNS1; the interaction is increased by phosphorylation of TNS1. PTK2/FAK1 activation mediates phosphorylation at the YDYVHL motif; phosphorylation is most likely catalyzed by SRC family members. SRC-family kinases are recruited to the phosphorylated sites and can phosphorylate other tyrosine residues. Tyrosine phosphorylation is triggered by integrin mediated adhesion of cells to the extracellular matrix. Post-translationally, phosphorylated by SRC kinase in a EDN1- and PTK2B-mediated manner; phosphorylation strengthens its interaction with BCAR3 as part of the PTK2B/BCAR1/BCAR3/RAP1 signaling pathway. In terms of processing, dephosphorylated by PTPN14 at Tyr-226. Widely expressed. Higher expression in lung, intestine and testis.

It localises to the cell junction. The protein localises to the focal adhesion. It is found in the cytoplasm. Its subcellular location is the cell projection. The protein resides in the axon. In terms of biological role, docking protein which plays a central coordinating role for tyrosine-kinase-based signaling related to cell adhesion. Implicated in induction of cell migration and cell branching. Involved in the BCAR3-mediated inhibition of TGFB signaling. The sequence is that of Breast cancer anti-estrogen resistance protein 1 (Bcar1) from Rattus norvegicus (Rat).